Consider the following 398-residue polypeptide: Enoyl-[acyl-carrier-protein] reductase [NADH] (398 aa).

Residues 48-53, 74-75, 111-112, and 139-140 each bind NAD(+); these read GSSTGY, FE, DA, and LA. Residue tyrosine 225 coordinates substrate. Tyrosine 235 (proton donor) is an active-site residue. NAD(+)-binding positions include lysine 244 and 273–275; that span reads VVT.

It belongs to the TER reductase family. Monomer.

It carries out the reaction a 2,3-saturated acyl-[ACP] + NAD(+) = a (2E)-enoyl-[ACP] + NADH + H(+). It functions in the pathway lipid metabolism; fatty acid biosynthesis. Functionally, involved in the final reduction of the elongation cycle of fatty acid synthesis (FAS II). Catalyzes the reduction of a carbon-carbon double bond in an enoyl moiety that is covalently linked to an acyl carrier protein (ACP). The sequence is that of Enoyl-[acyl-carrier-protein] reductase [NADH] from Pseudomonas aeruginosa (strain UCBPP-PA14).